We begin with the raw amino-acid sequence, 110 residues long: MDGTLFPGDDDLAIPATEFFSTKAAKKPEAKREAIVKADGDNNEETLKQRLTNLEKKITNVTTKFEQIEKCCKRNDDVLFRLENHAETLRAAMISLAKKIDVQTGRRPYE.

Belongs to the orthopoxvirus OPG154 protein family. In terms of assembly, homohexamers, covalently linked. Interacts with OPG144 and OPG153.

The protein localises to the virion. Structural protein involved in the envelopment of mature virion (MV) to form the wrapped virion (WV). The wrapping consists of the addition of Golgi membranes to the mature virion. Participates in mature virion (MV) movement within the infected cell. May play an indirect role in MV-cell fusion. The sequence is that of Protein OPG154 (OPG154) from Homo sapiens (Human).